The primary structure comprises 621 residues: MAPTLAPFAARWDAEADRRMALRTPEHLKALMDAQKGYNSARSTAATAKSQRTAARAASKNPLSTVRRAARTADKAARTHRDQAKTKLKAARKDYPATLRARAVQAHAMHAVPGAGISALGWDQAGAWPVAGSLALIAANVAALVIGRRKVAVAVADELSAEERRLVERLDPSYWAQHADERGLVGTVTTPVQVTPAGLVTTVRLDGRWKPSAFKAKHEEIRALLGARTDLRMEIKAGSHGDRAVITLRTRSAADGIDLTGWTPGAPWGVDTVTGEPVQVPLGRRMLIAGTSGSGKSWSTRALLAEGSEYADHRLVVVDPKRVEAINWQHRARTAISIEDVLDVTDELVEEMHERLELIPRGQDVIQISPERPRITVFIDEGAEVIAMAKKTRAKGSKEEPGDPDWSRIMENLSTLARMARAAEIILIWATQKPTMDAKGGIDPQISAQITYRAALALSTSGESRVVFGEDATEKGWHAHELPMPGVAMLRSGPKVQPHPINTRAFSPADVIALPDRPVWRRQESPARSAGASAPAPLRLVKETAPAAEVPAQPTKAPTNREKVAAAIGTGATTVADVATVTGINKGSVSKAVKQLLDAGEVLRSEDGSLSVVTQVGEVSA.

A helical transmembrane segment spans residues 126-146 (GAWPVAGSLALIAANVAALVI). The FtsK domain maps to 275–465 (GEPVQVPLGR…LALSTSGESR (191 aa)). 290-297 (GTSGSGKS) contributes to the ATP binding site. The chain crosses the membrane as a helical span at residues 564-584 (VAAAIGTGATTVADVATVTGI).

It is found in the cell membrane. Major protein required for plasmid transfer. The chain is Protein Tra (tra) from Streptomyces lividans.